The primary structure comprises 100 residues: Urease subunit gamma (100 aa).

Belongs to the urease gamma subunit family. As to quaternary structure, heterotrimer of UreA (gamma), UreB (beta) and UreC (alpha) subunits. Three heterotrimers associate to form the active enzyme.

It localises to the cytoplasm. The enzyme catalyses urea + 2 H2O + H(+) = hydrogencarbonate + 2 NH4(+). The protein operates within nitrogen metabolism; urea degradation; CO(2) and NH(3) from urea (urease route): step 1/1. The chain is Urease subunit gamma from Haemophilus influenzae (strain 86-028NP).